The following is a 369-amino-acid chain: MTPTDFTSPIPNMADDYGSESTSSMEDYVNFNFTDFYCEKNNVRQFASHFLPPLYWLVFIVGALGNSLVILVYWYCTRVKTMTDMFLLNLAIADLLFLVTLPFWAIAAADQWKFQTFMCKVVNSMYKMNFYSCVLLIMCISVDRYIAIAQAMRAHTWREKRLLYSKMVCFTIWVLAAALCIPEILYSQIKEESGIAICTMVYPSDESTKLKSAVLTLKVILGFFLPFVVMACCYTIIIHTLIQAKKSSKHKALKVTITVLTVFVLSQFPYNCILLVQTIDAYAMFISNCAVSTNIDICFQVTQTIAFFHSCLNPVLYVFVGERFRRDLVKTLKNLGCISQAQWVSFTRREGSLKLSSMLLETTSGALSL.

At 1 to 48 (MTPTDFTSPIPNMADDYGSESTSSMEDYVNFNFTDFYCEKNNVRQFAS) the chain is on the extracellular side. Residue Asn32 is glycosylated (N-linked (GlcNAc...) asparagine). 2 disulfide bridges follow: Cys38–Cys289 and Cys119–Cys198. The chain crosses the membrane as a helical span at residues 49-74 (HFLPPLYWLVFIVGALGNSLVILVYW). Residues 75–85 (YCTRVKTMTDM) lie on the Cytoplasmic side of the membrane. Residues 86–109 (FLLNLAIADLLFLVTLPFWAIAAA) form a helical membrane-spanning segment. The Extracellular segment spans residues 110–120 (DQWKFQTFMCK). A helical transmembrane segment spans residues 121 to 150 (VVNSMYKMNFYSCVLLIMCISVDRYIAIAQ). Topologically, residues 151–159 (AMRAHTWRE) are cytoplasmic. A helical membrane pass occupies residues 160–185 (KRLLYSKMVCFTIWVLAAALCIPEIL). Over 186-208 (YSQIKEESGIAICTMVYPSDEST) the chain is Extracellular. Residues 209 to 243 (KLKSAVLTLKVILGFFLPFVVMACCYTIIIHTLIQ) form a helical membrane-spanning segment. Over 244-248 (AKKSS) the chain is Cytoplasmic. A helical membrane pass occupies residues 249 to 283 (KHKALKVTITVLTVFVLSQFPYNCILLVQTIDAYA). Over 284–290 (MFISNCA) the chain is Extracellular. Residues 291 to 321 (VSTNIDICFQVTQTIAFFHSCLNPVLYVFVG) form a helical membrane-spanning segment. At 322–369 (ERFRRDLVKTLKNLGCISQAQWVSFTRREGSLKLSSMLLETTSGALSL) the chain is on the cytoplasmic side.

Belongs to the G-protein coupled receptor 1 family. As to expression, highly expressed in the thymus and low in lymph nodes and spleen.

Its subcellular location is the cell membrane. Receptor for chemokine SCYA25/TECK. Subsequently transduces a signal by increasing the intracellular calcium ions level. Functionally, (Microbial infection) Alternative coreceptor with CD4 for HIV-1 infection. The sequence is that of C-C chemokine receptor type 9 (CCR9) from Homo sapiens (Human).